Consider the following 515-residue polypeptide: Bifunctional purine biosynthesis protein PurH (515 aa).

The 144-residue stretch at Met1–Val144 folds into the MGS-like domain.

It belongs to the PurH family.

It carries out the reaction (6R)-10-formyltetrahydrofolate + 5-amino-1-(5-phospho-beta-D-ribosyl)imidazole-4-carboxamide = 5-formamido-1-(5-phospho-D-ribosyl)imidazole-4-carboxamide + (6S)-5,6,7,8-tetrahydrofolate. The enzyme catalyses IMP + H2O = 5-formamido-1-(5-phospho-D-ribosyl)imidazole-4-carboxamide. Its pathway is purine metabolism; IMP biosynthesis via de novo pathway; 5-formamido-1-(5-phospho-D-ribosyl)imidazole-4-carboxamide from 5-amino-1-(5-phospho-D-ribosyl)imidazole-4-carboxamide (10-formyl THF route): step 1/1. It participates in purine metabolism; IMP biosynthesis via de novo pathway; IMP from 5-formamido-1-(5-phospho-D-ribosyl)imidazole-4-carboxamide: step 1/1. The protein is Bifunctional purine biosynthesis protein PurH of Persephonella marina (strain DSM 14350 / EX-H1).